A 303-amino-acid chain; its full sequence is Pycsar effector protein BcPycTIR (303 aa).

22 to 138 (KLVGGDKGLA…RRMAKELSKR (117 aa)) lines the a nucleoside 3',5'-cyclic phosphate pocket. The tract at residues 154-273 (RVFVISSAEA…DMAGVTTIPY (120 aa)) is TIR-like.

As to quaternary structure, purified protein forms large 2-dimensional sheets when incubated with cUMP and shorter filaments in the presence of cCMP.

The protein resides in the cytoplasm. It carries out the reaction NAD(+) + H2O = ADP-D-ribose + nicotinamide + H(+). Activated by cyclic UMP (cUMP) and to a lesser extent by cCMP. Its function is as follows. Pycsar (pyrimidine cyclase system for antiphage resistance) provides immunity against bacteriophage. The pyrimidine cyclase (PycC) synthesizes cyclic nucleotides in response to infection; these serve as specific second messenger signals. The signals activate the adjacent effector, leading to bacterial cell death and abortive phage infection. A clade B Pycsar system. Functionally, the effector protein of a two-gene Pycsar system. Upon activation by cyclic UMP (cUMP) degrades cellular NAD(+). Expression of this and adjacent uridylate cyclase BcPycC (AC A0A0J5ZXG5) probably confers resistance to bacteriophage. The genes are probably only expressed in response to bacteriophage infection. This protein probably only responds to cUMP (produced by its cognate NTP cyclase). The protein is Pycsar effector protein BcPycTIR of Burkholderia cepacia (Pseudomonas cepacia).